A 665-amino-acid chain; its full sequence is Probable potassium transport system protein Kup (665 aa).

The span at 1 to 18 (MASEAPHASAPDCAPASS) shows a compositional bias: low complexity. The disordered stretch occupies residues 1–31 (MASEAPHASAPDCAPASSDIPQQDGGSTNGH). 12 consecutive transmembrane segments (helical) span residues 40–60 (FFALALGSVGVVFGDIGTSPL), 83–103 (VVSLALWALILIVTIKYVVFI), 131–151 (LVFVLGVAGAALFYGDAVITP), 171–191 (GVTNEVVLLIATVMLLGLFFI), 202–222 (LFGPVCAVWFGVMFSLGLMNL), 245–265 (GLTGFIVLGAVFLTVTGVEAL), 281–301 (WLFFVLPCLAMNYLGQGAFAL), 332–352 (LVLLAGAATVIASQAVITGAF), 380–400 (IFVPQLNTMLLLGVLAIMFTF), 409–429 (AYGLAVTGTMIVTTCMAFIVM), 435–455 (WSMPMALLFLVPFLALDITFL), and 462–482 (FFSGGWLPVLIGAALFTIMAT).

The protein belongs to the HAK/KUP transporter (TC 2.A.72) family.

It is found in the cell inner membrane. The catalysed reaction is K(+)(in) + H(+)(in) = K(+)(out) + H(+)(out). Functionally, transport of potassium into the cell. Likely operates as a K(+):H(+) symporter. The chain is Probable potassium transport system protein Kup from Caulobacter vibrioides (strain ATCC 19089 / CIP 103742 / CB 15) (Caulobacter crescentus).